We begin with the raw amino-acid sequence, 229 residues long: Cytosolic-abundant heat soluble protein 107838 (229 aa).

The interval 1-29 (MSAEAMNMNMNQDAVFIPPPEGEQYERKE) is disordered. The stretch at 109 to 145 (LSANYQKEVERKTEAYRKQQEVEADKIRKELEKQHLR) forms a coiled coil. 2 CAHS motif regions span residues 124–142 (YRKQ…LEKQ) and 161–179 (QKKM…MDRE). The span at 202–218 (SSAAGTETGGQVVSESQ) shows a compositional bias: polar residues. The segment at 202–229 (SSAAGTETGGQVVSESQKFTERNRQIKQ) is disordered. A compositionally biased stretch (basic and acidic residues) spans 219 to 229 (KFTERNRQIKQ).

It belongs to the Cytosolic-abundant heat soluble protein (CAHS) family.

It localises to the cytoplasm. Functionally, CAHS proteins are cytosolic heat soluble proteins that seem to contribute to the anhydrobiosis in tardigrades, but their specific mechanisms are yet to be identified. It is possible that protection during anhydrobiosis might occur via the stabilization of vitrifying small molecules such as sugars, but not via the direct glass transition of CAHS proteins themselves. The polypeptide is Cytosolic-abundant heat soluble protein 107838 (Paramacrobiotus richtersi (Water bear)).